A 450-amino-acid chain; its full sequence is 23S rRNA (uracil(1939)-C(5))-methyltransferase RlmD (450 aa).

Residues Ser-12–Lys-70 form the TRAM domain. [4Fe-4S] cluster-binding residues include Cys-83, Cys-89, Cys-92, and Cys-171. S-adenosyl-L-methionine is bound by residues Gln-283, Phe-312, Asn-317, Glu-333, Asp-360, and Asp-380. The active-site Nucleophile is Cys-406.

The protein belongs to the class I-like SAM-binding methyltransferase superfamily. RNA M5U methyltransferase family. RlmD subfamily.

It carries out the reaction uridine(1939) in 23S rRNA + S-adenosyl-L-methionine = 5-methyluridine(1939) in 23S rRNA + S-adenosyl-L-homocysteine + H(+). Its function is as follows. Catalyzes the formation of 5-methyl-uridine at position 1939 (m5U1939) in 23S rRNA. The protein is 23S rRNA (uracil(1939)-C(5))-methyltransferase RlmD of Shewanella putrefaciens (strain CN-32 / ATCC BAA-453).